The following is a 276-amino-acid chain: Large ribosomal subunit protein uL2 (276 aa).

2 disordered regions span residues 35-58 (RKLSKTGGRNSYGRMTSRHRGGGH) and 218-276 (RPIT…KNRK). A compositionally biased stretch (basic residues) spans 255 to 276 (RRPKKASNKMIVRRRPNGKNRK).

It belongs to the universal ribosomal protein uL2 family. As to quaternary structure, part of the 50S ribosomal subunit. Forms a bridge to the 30S subunit in the 70S ribosome.

Functionally, one of the primary rRNA binding proteins. Required for association of the 30S and 50S subunits to form the 70S ribosome, for tRNA binding and peptide bond formation. It has been suggested to have peptidyltransferase activity; this is somewhat controversial. Makes several contacts with the 16S rRNA in the 70S ribosome. In Bifidobacterium adolescentis (strain ATCC 15703 / DSM 20083 / NCTC 11814 / E194a), this protein is Large ribosomal subunit protein uL2.